Reading from the N-terminus, the 290-residue chain is 4-hydroxy-tetrahydrodipicolinate synthase (290 aa).

Threonine 44 provides a ligand contact to pyruvate. The Proton donor/acceptor role is filled by tyrosine 132. The Schiff-base intermediate with substrate role is filled by lysine 160. Isoleucine 202 serves as a coordination point for pyruvate.

The protein belongs to the DapA family. As to quaternary structure, homotetramer; dimer of dimers.

The protein resides in the cytoplasm. The catalysed reaction is L-aspartate 4-semialdehyde + pyruvate = (2S,4S)-4-hydroxy-2,3,4,5-tetrahydrodipicolinate + H2O + H(+). It functions in the pathway amino-acid biosynthesis; L-lysine biosynthesis via DAP pathway; (S)-tetrahydrodipicolinate from L-aspartate: step 3/4. Functionally, catalyzes the condensation of (S)-aspartate-beta-semialdehyde [(S)-ASA] and pyruvate to 4-hydroxy-tetrahydrodipicolinate (HTPA). This chain is 4-hydroxy-tetrahydrodipicolinate synthase, found in Legionella pneumophila (strain Corby).